A 297-amino-acid polypeptide reads, in one-letter code: Acetaldehyde dehydrogenase (297 aa).

NAD(+) is bound at residue 18 to 21 (TGNI). Residue Cys-133 is the Acyl-thioester intermediate of the active site. NAD(+) contacts are provided by residues 165–173 (SAGPATRLN) and Asn-275.

The protein belongs to the acetaldehyde dehydrogenase family.

The catalysed reaction is acetaldehyde + NAD(+) + CoA = acetyl-CoA + NADH + H(+). The chain is Acetaldehyde dehydrogenase from Spirochaeta aurantia.